The sequence spans 207 residues: Protein FMP32, mitochondrial (207 aa).

Residues 100-136 (ADRSEFHNIQNEYESVKNDLEKLRNKLREEITKTNAG) adopt a coiled-coil conformation. Residues 184 to 206 (VMQWLIGVCTGTFALVLAYMRLL) form a helical membrane-spanning segment.

It belongs to the CCDC90 family.

Its subcellular location is the mitochondrion. It is found in the membrane. This chain is Protein FMP32, mitochondrial (FMP32), found in Saccharomyces cerevisiae (strain ATCC 204508 / S288c) (Baker's yeast).